The following is a 111-amino-acid chain: Cytochrome c oxidase subunit 6A1, mitochondrial (111 aa).

The transit peptide at methionine 1–methionine 26 directs the protein to the mitochondrion. The Mitochondrial matrix segment spans residues serine 27–serine 36. The chain crosses the membrane as a helical span at residues alanine 37–leucine 61. At lysine 62–glutamate 111 the chain is on the mitochondrial intermembrane side.

It belongs to the cytochrome c oxidase subunit 6A family. Component of the cytochrome c oxidase (complex IV, CIV), a multisubunit enzyme composed of 14 subunits. The complex is composed of a catalytic core of 3 subunits MT-CO1, MT-CO2 and MT-CO3, encoded in the mitochondrial DNA, and 11 supernumerary subunits COX4I, COX5A, COX5B, COX6A, COX6B, COX6C, COX7A, COX7B, COX7C, COX8 and NDUFA4, which are encoded in the nuclear genome. The complex exists as a monomer or a dimer and forms supercomplexes (SCs) in the inner mitochondrial membrane with NADH-ubiquinone oxidoreductase (complex I, CI) and ubiquinol-cytochrome c oxidoreductase (cytochrome b-c1 complex, complex III, CIII), resulting in different assemblies (supercomplex SCI(1)III(2)IV(1) and megacomplex MCI(2)III(2)IV(2)).

Its subcellular location is the mitochondrion inner membrane. Its pathway is energy metabolism; oxidative phosphorylation. In terms of biological role, component of the cytochrome c oxidase, the last enzyme in the mitochondrial electron transport chain which drives oxidative phosphorylation. The respiratory chain contains 3 multisubunit complexes succinate dehydrogenase (complex II, CII), ubiquinol-cytochrome c oxidoreductase (cytochrome b-c1 complex, complex III, CIII) and cytochrome c oxidase (complex IV, CIV), that cooperate to transfer electrons derived from NADH and succinate to molecular oxygen, creating an electrochemical gradient over the inner membrane that drives transmembrane transport and the ATP synthase. Cytochrome c oxidase is the component of the respiratory chain that catalyzes the reduction of oxygen to water. Electrons originating from reduced cytochrome c in the intermembrane space (IMS) are transferred via the dinuclear copper A center (CU(A)) of subunit 2 and heme A of subunit 1 to the active site in subunit 1, a binuclear center (BNC) formed by heme A3 and copper B (CU(B)). The BNC reduces molecular oxygen to 2 water molecules unsing 4 electrons from cytochrome c in the IMS and 4 protons from the mitochondrial matrix. In Mus musculus (Mouse), this protein is Cytochrome c oxidase subunit 6A1, mitochondrial (Cox6a1).